Here is a 160-residue protein sequence, read N- to C-terminus: UPF0178 protein PSPA7_5991 (160 aa).

This sequence belongs to the UPF0178 family.

The protein is UPF0178 protein PSPA7_5991 of Pseudomonas paraeruginosa (strain DSM 24068 / PA7) (Pseudomonas aeruginosa (strain PA7)).